A 340-amino-acid chain; its full sequence is Cysteinyl leukotriene receptor 1 (340 aa).

Topologically, residues 1–31 are extracellular; it reads MDETGNPTIPPASNNTCYDSIDDFRNQVYST. A glycan (N-linked (GlcNAc...) asparagine) is linked at N14. A helical membrane pass occupies residues 32 to 52; that stretch reads LYSMISVVGFFGNGFVLYVLV. Residues 53-60 lie on the Cytoplasmic side of the membrane; that stretch reads KTYHEKSA. Residues 61–81 traverse the membrane as a helical segment; it reads FQVYMINLAVADLLCVCTLPL. Topologically, residues 82 to 109 are extracellular; it reads RVAYYVHKGIWLFGDFLCRLSTYALYVN. An intrachain disulfide couples C99 to C176. A helical membrane pass occupies residues 110-130; it reads LYCSIFFMTAMSFFRCVAIVF. The Cytoplasmic portion of the chain corresponds to 131 to 144; sequence PVQNISLVTQKKAR. Residues 145–165 traverse the membrane as a helical segment; sequence LVCIAIWMFVILTSSPFLMAN. Over 166–196 the chain is Extracellular; it reads TYKDEKNNTKCFEPPQDNQAKNYVLILHYVS. A glycan (N-linked (GlcNAc...) asparagine) is linked at N172. The chain crosses the membrane as a helical span at residues 197-217; that stretch reads LFIGFIIPFITIIVCYTMIIF. Over 218–233 the chain is Cytoplasmic; that stretch reads TLLKSSMKKNLSSRKR. Residues 234-254 traverse the membrane as a helical segment; it reads AIGMIIVVTAAFLVSFMPYHI. Residues 255-279 lie on the Extracellular side of the membrane; that stretch reads QRTIHLHFLHNKTKPCDSILRMQKS. N265 carries N-linked (GlcNAc...) asparagine glycosylation. Residues 280–300 traverse the membrane as a helical segment; the sequence is VVITLSLAASNCCFDPLLYFF. Topologically, residues 301–340 are cytoplasmic; it reads SGGNFRRRLSTIRKYSLSSMTYIPKKKTSLPQKGKDICKE.

It belongs to the G-protein coupled receptor 1 family.

The protein localises to the cell membrane. In terms of biological role, receptor for cysteinyl leukotrienes mediating bronchoconstriction of individuals with and without asthma. Stimulation by LTD4 results in the contraction and proliferation of smooth muscle, edema, eosinophil migration and damage to the mucus layer in the lung. This response is mediated via a G-protein that activates a phosphatidylinositol-calcium second messenger system. The sequence is that of Cysteinyl leukotriene receptor 1 (CYSLTR1) from Cavia porcellus (Guinea pig).